Consider the following 355-residue polypeptide: S-adenosylmethionine:tRNA ribosyltransferase-isomerase (355 aa).

Belongs to the QueA family. As to quaternary structure, monomer.

The protein resides in the cytoplasm. It carries out the reaction 7-aminomethyl-7-carbaguanosine(34) in tRNA + S-adenosyl-L-methionine = epoxyqueuosine(34) in tRNA + adenine + L-methionine + 2 H(+). It participates in tRNA modification; tRNA-queuosine biosynthesis. In terms of biological role, transfers and isomerizes the ribose moiety from AdoMet to the 7-aminomethyl group of 7-deazaguanine (preQ1-tRNA) to give epoxyqueuosine (oQ-tRNA). The chain is S-adenosylmethionine:tRNA ribosyltransferase-isomerase from Gluconacetobacter diazotrophicus (strain ATCC 49037 / DSM 5601 / CCUG 37298 / CIP 103539 / LMG 7603 / PAl5).